The chain runs to 488 residues: 7,8-epoxymelianol synthase CYP88A51 (488 aa).

The helical transmembrane segment at 4 to 24 threads the bilayer; that stretch reads NFLWPMLAMFLGSLVVMFGFL. Cysteine 436 provides a ligand contact to heme.

Belongs to the cytochrome P450 family. It depends on heme as a cofactor. In terms of tissue distribution, accumulates in mature fruits and in juice vesicles.

The protein localises to the membrane. It catalyses the reaction melianol + reduced [NADPH--hemoprotein reductase] + O2 = 7,8-epoxymelianol + oxidized [NADPH--hemoprotein reductase] + H2O + H(+). It functions in the pathway secondary metabolite biosynthesis; terpenoid biosynthesis. In terms of biological role, monooxygenase involved in the biosynthesis of limonoids triterpene natural products such as limonin, a compound with insecticidal activity responsible for the bitter taste in citrus. Catalyzes the epoxidation of melianol to produce 7,8-epoxymelianol. This Citrus sinensis (Sweet orange) protein is 7,8-epoxymelianol synthase CYP88A51.